The chain runs to 150 residues: Probable NADH dehydrogenase [ubiquinone] 1 alpha subcomplex subunit 5 (150 aa).

This sequence belongs to the complex I NDUFA5 subunit family. In terms of assembly, complex I is composed of 45 different subunits.

It localises to the mitochondrion inner membrane. Accessory subunit of the mitochondrial membrane respiratory chain NADH dehydrogenase (Complex I), that is believed not to be involved in catalysis. Complex I functions in the transfer of electrons from NADH to the respiratory chain. The immediate electron acceptor for the enzyme is believed to be ubiquinone. This Caenorhabditis elegans protein is Probable NADH dehydrogenase [ubiquinone] 1 alpha subcomplex subunit 5.